A 295-amino-acid chain; its full sequence is Acetylglutamate kinase (295 aa).

Substrate is bound by residues 61–62 (GG), arginine 83, and asparagine 182.

It belongs to the acetylglutamate kinase family. ArgB subfamily.

The protein localises to the cytoplasm. The enzyme catalyses N-acetyl-L-glutamate + ATP = N-acetyl-L-glutamyl 5-phosphate + ADP. It functions in the pathway amino-acid biosynthesis; L-arginine biosynthesis; N(2)-acetyl-L-ornithine from L-glutamate: step 2/4. Its function is as follows. Catalyzes the ATP-dependent phosphorylation of N-acetyl-L-glutamate. This chain is Acetylglutamate kinase, found in Clostridium acetobutylicum (strain ATCC 824 / DSM 792 / JCM 1419 / IAM 19013 / LMG 5710 / NBRC 13948 / NRRL B-527 / VKM B-1787 / 2291 / W).